Consider the following 214-residue polypeptide: Type 4 apparatus protein DotN (214 aa).

Positions 52, 55, 84, and 87 each coordinate Zn(2+).

The T4BSS is a complex nanomachine composed of several subcomplexes. This subunit is part of the Type IV Coupling Complex (T4CC), a subcomplex composed of the DotLMNYZ core and the IcmSW-LvgA adapter subunits, linked by the C-terminal tail of DotL. Six DotLMNYZ hetero-pentameric units may assemble into a hexameric nanomachine, forming an inner membrane channel for effectors to pass through. Interacts directly with DotL. Interacts with DotZ.

Its subcellular location is the cytoplasm. Its function is as follows. Component of the Dot/Icm type IVB secretion system (T4BSS), which is used to inject bacterial effector proteins into eukaryotic host cells. Part of a subcomplex which recruits effector proteins and delivers them to the core transmembrane subcomplex. This is Type 4 apparatus protein DotN from Legionella pneumophila subsp. pneumophila (strain Philadelphia 1 / ATCC 33152 / DSM 7513).